The chain runs to 188 residues: Elongation factor P (188 aa).

Belongs to the elongation factor P family.

It is found in the cytoplasm. It participates in protein biosynthesis; polypeptide chain elongation. Involved in peptide bond synthesis. Stimulates efficient translation and peptide-bond synthesis on native or reconstituted 70S ribosomes in vitro. Probably functions indirectly by altering the affinity of the ribosome for aminoacyl-tRNA, thus increasing their reactivity as acceptors for peptidyl transferase. The protein is Elongation factor P of Gluconobacter oxydans (strain 621H) (Gluconobacter suboxydans).